Reading from the N-terminus, the 158-residue chain is uncharacterized protein (158 aa).

4 consecutive transmembrane segments (helical) span residues 12–32 (IITL…AVVV), 39–59 (LDIL…SLSV), 90–110 (LIYL…FNTI), and 113–133 (IIST…WLPL).

It is found in the cell membrane. This is an uncharacterized protein from Mycoplasma genitalium (strain ATCC 33530 / DSM 19775 / NCTC 10195 / G37) (Mycoplasmoides genitalium).